The sequence spans 158 residues: UPF0102 protein GbCGDNIH1_0975 (158 aa).

This sequence belongs to the UPF0102 family.

The polypeptide is UPF0102 protein GbCGDNIH1_0975 (Granulibacter bethesdensis (strain ATCC BAA-1260 / CGDNIH1)).